Here is a 371-residue protein sequence, read N- to C-terminus: SufE-like protein 1, chloroplastic/mitochondrial (371 aa).

Residues 1–66 constitute a chloroplast and mitochondrion transit peptide; sequence MAAAMSSSCC…ISTGIVPPPS (66 aa). Residue C131 is the Cysteine persulfide intermediate of the active site. At C131 the chain carries S-glutathionyl cysteine. Residues 218–249 are disordered; it reads VKGEEDSSSGESSESSFVSIPETKDEANVPEV.

Belongs to the SufE family. Heterotetramer with NFS2. Interacts with NFS2 and NIFS1. Interacts in vitro with GRXS14, GRXS15, GRXS16 and GRXS17, but not with GRXC5. Interacts in vivo only with GRXS14 and GRXS16. Post-translationally, glutathionylated. Glutathionylation strongly reduces the stimulation of NFS2 activity. As to expression, expressed in roots, leaves, stems and flowers.

The protein localises to the plastid. It localises to the chloroplast stroma. Its subcellular location is the mitochondrion. It participates in cofactor biosynthesis; iron-sulfur cluster biosynthesis. Participates in cysteine desulfurization mediated by NFS2 in chloroplast and NIFS1 in mitochondrion. Activates the cysteine desulfurase activity of NFS2. Cysteine desulfurization mobilizes sulfur from L-cysteine to yield L-alanine and supplies the inorganic sulfur for iron-sulfur (Fe-S) cluster formation. Glutaredoxins regulate SUFE1 activity by inducing its reduction and deglutathionylation. The protein is SufE-like protein 1, chloroplastic/mitochondrial of Arabidopsis thaliana (Mouse-ear cress).